Reading from the N-terminus, the 281-residue chain is Polyamine aminopropyltransferase (281 aa).

The 236-residue stretch at 2–237 (EIWYTEKLEL…GIIGFTFLSN (236 aa)) folds into the PABS domain. Gln33 is an S-methyl-5'-thioadenosine binding site. Positions 64 and 88 each coordinate spermidine. S-methyl-5'-thioadenosine contacts are provided by residues Glu108 and 139–140 (DG). The active-site Proton acceptor is the Asp157. 157–160 (DSSD) provides a ligand contact to spermidine. Pro164 is a binding site for S-methyl-5'-thioadenosine.

This sequence belongs to the spermidine/spermine synthase family. Homodimer or homotetramer.

The protein resides in the cytoplasm. It catalyses the reaction S-adenosyl 3-(methylsulfanyl)propylamine + putrescine = S-methyl-5'-thioadenosine + spermidine + H(+). The protein operates within amine and polyamine biosynthesis; spermidine biosynthesis; spermidine from putrescine: step 1/1. In terms of biological role, catalyzes the irreversible transfer of a propylamine group from the amino donor S-adenosylmethioninamine (decarboxy-AdoMet) to putrescine (1,4-diaminobutane) to yield spermidine. The sequence is that of Polyamine aminopropyltransferase from Leptospira biflexa serovar Patoc (strain Patoc 1 / Ames).